The primary structure comprises 79 residues: Putative defensin-like protein 137 (79 aa).

The first 24 residues, 1–24, serve as a signal peptide directing secretion; that stretch reads MKKYFQPSFVILIIFTVLVLGVVG. 4 disulfides stabilise this stretch: cysteine 33-cysteine 78, cysteine 42-cysteine 62, cysteine 47-cysteine 72, and cysteine 51-cysteine 74.

The protein belongs to the DEFL family.

Its subcellular location is the secreted. The sequence is that of Putative defensin-like protein 137 (LCR14) from Arabidopsis thaliana (Mouse-ear cress).